A 218-amino-acid polypeptide reads, in one-letter code: Small ribosomal subunit protein uS3c (218 aa).

A KH type-2 domain is found at 47 to 118 (VRRHMKNYSN…KLNISIAKVA (72 aa)).

This sequence belongs to the universal ribosomal protein uS3 family. Part of the 30S ribosomal subunit.

Its subcellular location is the plastid. The protein resides in the chloroplast. This Ginkgo biloba (Ginkgo) protein is Small ribosomal subunit protein uS3c (rps3).